Here is a 177-residue protein sequence, read N- to C-terminus: Putative pre-16S rRNA nuclease (177 aa).

The protein belongs to the YqgF nuclease family.

It localises to the cytoplasm. Its function is as follows. Could be a nuclease involved in processing of the 5'-end of pre-16S rRNA. The sequence is that of Putative pre-16S rRNA nuclease from Psychrobacter arcticus (strain DSM 17307 / VKM B-2377 / 273-4).